The sequence spans 107 residues: Snaclec VP12 subunit A (107 aa).

2 disulfide bridges follow: C4/C15 and C32/C107. The C-type lectin domain maps to 11–107 (YEGNCYKAFD…ECGLAYPFIC (97 aa)).

Belongs to the snaclec family. As to quaternary structure, heterodimer of subunits alpha and beta; disulfide-linked. As to expression, expressed by the venom gland.

It is found in the secreted. Inhibits integrin alpha-2/beta-1- (ITGA2/ITGB1) dependent melanoma metastasis. The polypeptide is Snaclec VP12 subunit A (Daboia palaestinae (Palestine viper)).